A 470-amino-acid polypeptide reads, in one-letter code: UDP-N-acetylmuramoylalanine--D-glutamate ligase (470 aa).

Residue 121–127 (GTNGKST) coordinates ATP.

Belongs to the MurCDEF family.

It is found in the cytoplasm. It catalyses the reaction UDP-N-acetyl-alpha-D-muramoyl-L-alanine + D-glutamate + ATP = UDP-N-acetyl-alpha-D-muramoyl-L-alanyl-D-glutamate + ADP + phosphate + H(+). Its pathway is cell wall biogenesis; peptidoglycan biosynthesis. Cell wall formation. Catalyzes the addition of glutamate to the nucleotide precursor UDP-N-acetylmuramoyl-L-alanine (UMA). This Rhizobium etli (strain ATCC 51251 / DSM 11541 / JCM 21823 / NBRC 15573 / CFN 42) protein is UDP-N-acetylmuramoylalanine--D-glutamate ligase.